Here is a 507-residue protein sequence, read N- to C-terminus: ATP synthase subunit alpha (507 aa).

169 to 176 (GDRQIGKT) is an ATP binding site.

This sequence belongs to the ATPase alpha/beta chains family. As to quaternary structure, F-type ATPases have 2 components, CF(1) - the catalytic core - and CF(0) - the membrane proton channel. CF(1) has five subunits: alpha(3), beta(3), gamma(1), delta(1), epsilon(1). CF(0) has three main subunits: a(1), b(2) and c(9-12). The alpha and beta chains form an alternating ring which encloses part of the gamma chain. CF(1) is attached to CF(0) by a central stalk formed by the gamma and epsilon chains, while a peripheral stalk is formed by the delta and b chains.

It localises to the cell inner membrane. It carries out the reaction ATP + H2O + 4 H(+)(in) = ADP + phosphate + 5 H(+)(out). Functionally, produces ATP from ADP in the presence of a proton gradient across the membrane. The alpha chain is a regulatory subunit. The sequence is that of ATP synthase subunit alpha from Desulfotalea psychrophila (strain LSv54 / DSM 12343).